The primary structure comprises 330 residues: Nitrilase 3 (330 aa).

The region spanning Val-4 to Phe-273 is the CN hydrolase domain. The active-site Proton acceptor is Glu-44. Residue Lys-128 is the Proton donor of the active site. Cys-162 acts as the Nucleophile in catalysis. The disordered stretch occupies residues Arg-310–Ala-330.

Belongs to the carbon-nitrogen hydrolase superfamily. Nitrilase family.

It catalyses the reaction a nitrile + 2 H2O = a carboxylate + NH4(+). In terms of biological role, nitrilases catalyze the mild hydrolytic conversion of organonitriles directly to the corresponding carboxylic acids. The protein is Nitrilase 3 of Unknown prokaryotic organism.